Reading from the N-terminus, the 445-residue chain is Putative serpin-Z5 (445 aa).

The segment at 356–380 (GTEAAASAINMVCGMSMTPEPRPVP) is RCL.

It belongs to the serpin family.

Its function is as follows. Probable serine protease inhibitor. The protein is Putative serpin-Z5 of Oryza sativa subsp. japonica (Rice).